The following is a 28-amino-acid chain: Cruzioseptin-4 (28 aa).

Position 25 is a glutamic acid 1-amide (Glu25). Positions 27-28 (EH) are excised as a propeptide.

In terms of tissue distribution, expressed by the skin glands.

The protein localises to the secreted. Its function is as follows. Has antimicrobial activity. This is Cruzioseptin-4 from Cruziohyla calcarifer (Splendid leaf frog).